Reading from the N-terminus, the 301-residue chain is Possible hemolysin C (301 aa).

CBS domains are found at residues 80 to 142 (MVPR…NGRL) and 145 to 202 (LIRK…IDDE).

Belongs to the UPF0053 family. Hemolysin C subfamily.

The chain is Possible hemolysin C (tlyC) from Rickettsia akari (strain Hartford).